The sequence spans 56 residues: Large ribosomal subunit protein bL33 (56 aa).

Belongs to the bacterial ribosomal protein bL33 family.

This is Large ribosomal subunit protein bL33 from Treponema denticola (strain ATCC 35405 / DSM 14222 / CIP 103919 / JCM 8153 / KCTC 15104).